The primary structure comprises 747 residues: Mediator of RNA polymerase II transcription subunit 25 (747 aa).

The tract at residues 1-226 (MVPGSEGPAR…PRHMVLVRGL (226 aa)) is interaction with the Mediator complex. Disordered stretches follow at residues 233 to 274 (GSAP…QYQV) and 299 to 390 (LGPR…PALG). Composition is skewed to pro residues over residues 263-272 (QPLPPVPPQY) and 326-342 (PQLPPGPPGAPKPPPAS). The segment at 389-543 (LGGQQSVSNK…VNGIRQVITN (155 aa)) is interaction with VP16. The tract at residues 395–545 (VSNKLLAWSG…GIRQVITNHK (151 aa)) is interaction with CREBBP. Residues 548 to 747 (QQQKLEQQQR…MEDDILMDLI (200 aa)) are disordered. 2 interaction with RARA regions span residues 564 to 653 (APPG…LLNP) and 640 to 707 (PGAN…WPAQ). Residues 598–611 (ASGATGQPQPQGTA) are compositionally biased toward low complexity. Positions 612–634 (QPPPGAPQGPPGAASGPPPPGPI) are enriched in pro residues. The short motif at 646–650 (LRSLL) is the LXXLL motif element. 3 stretches are compositionally biased toward pro residues: residues 652–664 (NPPPPQTGVPPPQ), 673–683 (PGAPALLPPPH), and 691–713 (LGPPLLHPPPAQSWPAQLPPRAP). Arg-725 bears the Asymmetric dimethylarginine mark. The segment covering 738–747 (MEDDILMDLI) has biased composition (acidic residues).

Belongs to the Mediator complex subunit 25 family. In terms of assembly, component of the Mediator complex, which is composed of MED1, MED4, MED6, MED7, MED8, MED9, MED10, MED11, MED12, MED13, MED13L, MED14, MED15, MED16, MED17, MED18, MED19, MED20, MED21, MED22, MED23, MED24, MED25, MED26, MED27, MED29, MED30, MED31, CCNC, CDK8 and CDC2L6/CDK11. The MED12, MED13, CCNC and CDK8 subunits form a distinct module termed the CDK8 module. Mediator containing the CDK8 module is less active than Mediator lacking this module in supporting transcriptional activation. Individual preparations of the Mediator complex lacking one or more distinct subunits have been variously termed ARC, CRSP, DRIP, PC2, SMCC and TRAP. Interacts with CREBBP. Interacts with ESR1, GR, RARA, RXRA and THRB in a ligand-dependent fashion. Binds the Herpes simplex virus activator VP16. As to expression, ubiquitously expressed. Highest levels in brain, heart, kidney, peripheral leukocytes, placenta, skeletal muscle and spleen.

It localises to the nucleus. Functionally, component of the Mediator complex, a coactivator involved in the regulated transcription of nearly all RNA polymerase II-dependent genes. Mediator functions as a bridge to convey information from gene-specific regulatory proteins to the basal RNA polymerase II transcription machinery. Mediator is recruited to promoters by direct interactions with regulatory proteins and serves as a scaffold for the assembly of a functional preinitiation complex with RNA polymerase II and the general transcription factors. Required for RARA/RXRA-mediated transcription. The polypeptide is Mediator of RNA polymerase II transcription subunit 25 (MED25) (Homo sapiens (Human)).